Consider the following 760-residue polypeptide: Pentatricopeptide repeat-containing protein At1g20230 (760 aa).

15 PPR repeats span residues 49-79 (DGYI…IPDP), 80-114 (TIYS…GLIP), 115-149 (DSHV…GLDM), 150-180 (DAFV…MSDK), 181-215 (DVVT…GIEA), 216-250 (NIVS…GFCP), 251-285 (DQVT…GLLK), 286-316 (DKCV…FEMM), 317-351 (EAGV…TMEL), 352-386 (NVVS…GVKP), 387-421 (NHVT…HLLD), 422-452 (NVHV…MPTK), 453-487 (NLVC…RLKP), 488-523 (DFIS…GIKP), and 524-554 (RLEH…MPFE). The type E motif stretch occupies residues 559–634 (VWGALLNSCR…NPGCSWIQVK (76 aa)). A type E(+) motif region spans residues 635 to 665 (NRVYTLLAGDKSHPQIDQITEKMDEISKEMR). Positions 666–760 (KSGHRPNLDF…DGICSCGDFW (95 aa)) are type DYW motif.

The protein belongs to the PPR family. PCMP-H subfamily.

The sequence is that of Pentatricopeptide repeat-containing protein At1g20230 (PCMP-H21) from Arabidopsis thaliana (Mouse-ear cress).